The chain runs to 107 residues: C-X-C motif chemokine 2 (107 aa).

The N-terminal stretch at 1 to 34 (MARATLSAAPSNPRLLRVALLLLLLVAASRRAAG) is a signal peptide. Disulfide bonds link Cys43-Cys69 and Cys45-Cys85.

It belongs to the intercrine alpha (chemokine CxC) family. The N-terminal processed form GRO-beta(5-73) is produced by proteolytic cleavage after secretion from bone marrow stromal cells.

Its subcellular location is the secreted. Produced by activated monocytes and neutrophils and expressed at sites of inflammation. Hematoregulatory chemokine, which, in vitro, suppresses hematopoietic progenitor cell proliferation. GRO-beta(5-73) shows a highly enhanced hematopoietic activity. The chain is C-X-C motif chemokine 2 (CXCL2) from Homo sapiens (Human).